The following is a 482-amino-acid chain: L-propargylglycine--L-glutamate ligase (482 aa).

The enzyme catalyses L-propargylglycine + L-glutamate + ATP = L-gamma-glutamyl-L-propargylglycine + ADP + phosphate + H(+). It functions in the pathway amino-acid metabolism. It participates in antibiotic biosynthesis. Involved in the biosynthesis of terminal alkyne-containing amino acids such as L-beta-ethynylserine, that are produced as antibiotics by S.cattleya. Catalyzes the ATP-dependent ligation of L-propargylglycine to L-glutamate to form the dipeptide L-gamma-glutamyl-L-propargylglycine. Is selective for L-propargylglycine over norvaline, allylglycine and the standard proteinogenic amino acids, except L-cysteine which can be used as a substrate to a lesser extent. The polypeptide is L-propargylglycine--L-glutamate ligase (Streptantibioticus cattleyicolor (strain ATCC 35852 / DSM 46488 / JCM 4925 / NBRC 14057 / NRRL 8057) (Streptomyces cattleya)).